Consider the following 104-residue polypeptide: L-rhamnose mutarotase (104 aa).

Tyr18 is a substrate binding site. The Proton donor role is filled by His22. Substrate-binding positions include Tyr41 and 76 to 77; that span reads WW.

It belongs to the rhamnose mutarotase family. As to quaternary structure, homodimer.

Its subcellular location is the cytoplasm. It carries out the reaction alpha-L-rhamnose = beta-L-rhamnose. It functions in the pathway carbohydrate metabolism; L-rhamnose metabolism. Involved in the anomeric conversion of L-rhamnose. This Escherichia fergusonii (strain ATCC 35469 / DSM 13698 / CCUG 18766 / IAM 14443 / JCM 21226 / LMG 7866 / NBRC 102419 / NCTC 12128 / CDC 0568-73) protein is L-rhamnose mutarotase.